Here is a 782-residue protein sequence, read N- to C-terminus: Coiled-coil alpha-helical rod protein 1 (782 aa).

2 stretches are compositionally biased toward basic and acidic residues: residues 62–74 (ERDVSSDRQEPGR) and 208–218 (ETRRAGEAKEL). Disordered regions lie at residues 62 to 82 (ERDVSSDRQEPGRRGRSWGLE) and 191 to 218 (SSLTSKAEGLEKSLSSLETRRAGEAKEL). 3 coiled-coil regions span residues 82–314 (EGSQ…ELTR), 344–435 (LMVQ…VVNA), and 498–691 (VADV…QQEG).

The protein localises to the cytoplasm. It localises to the nucleus. In terms of biological role, may be a regulator of keratinocyte proliferation or differentiation. The sequence is that of Coiled-coil alpha-helical rod protein 1 (CCHCR1) from Pongo pygmaeus (Bornean orangutan).